Reading from the N-terminus, the 173-residue chain is RNA pyrophosphohydrolase (173 aa).

The region spanning 6 to 149 is the Nudix hydrolase domain; that stretch reads GFRANVGIII…KRDVYRKVMK (144 aa). A Nudix box motif is present at residues 38–59; it reads GGVDDGESAEEAMYRELYEEVG.

Belongs to the Nudix hydrolase family. RppH subfamily. It depends on a divalent metal cation as a cofactor.

In terms of biological role, accelerates the degradation of transcripts by removing pyrophosphate from the 5'-end of triphosphorylated RNA, leading to a more labile monophosphorylated state that can stimulate subsequent ribonuclease cleavage. The chain is RNA pyrophosphohydrolase from Shewanella pealeana (strain ATCC 700345 / ANG-SQ1).